We begin with the raw amino-acid sequence, 78 residues long: Xibalbin-13 1 (78 aa).

Residues 1 to 27 form the signal peptide; it reads MKEANTRRYIHLCLVVVLVSTIITTEA. The propeptide occupies 28-31; the sequence is EDDR. Intrachain disulfides connect Cys-34–Cys-49, Cys-41–Cys-54, Cys-48–Cys-65, and Cys-56–Cys-63. Ser-76 bears the Serine amide mark.

It belongs to the xibalbin-13 family. Expressed by the venom gland.

The protein localises to the secreted. Functionally, probable neurotoxin. Strongly inhibits voltage-gated potassium channels (Kv1.1/KCNA1, Kv1.2/KCNA2, Kv1.3/KCNA3, and Kv1.6/KCNA6) and mildly inhibits sodium channels (Nav1.2/SCN2A, Nav1.4/SCN4A, Nav1.5/SCN5A, Nav1.6/SCN8A, and BgNav). Induces activation of protein kinase A type II (PKA-II) and MAP kinase Erk1/2 in primary nociceptive and non-nociceptive sensory neurons. Does not show cytotoxic activity. Does not have an impact on Ca2+, cAMP, and NO signaling in the cell types analyzed. Does not interfere with the adhesion of leukocytes to endothelial cells. The protein is Xibalbin-13 1 of Xibalbanus tulumensis (Blind cave remipede).